A 209-amino-acid polypeptide reads, in one-letter code: Uracil phosphoribosyltransferase (209 aa).

Residues arginine 79, arginine 104, and 131–139 each bind 5-phospho-alpha-D-ribose 1-diphosphate; that span reads DPMLATGGS. Uracil is bound by residues isoleucine 194 and 199-201; that span reads GDA. Aspartate 200 serves as a coordination point for 5-phospho-alpha-D-ribose 1-diphosphate.

The protein belongs to the UPRTase family. The cofactor is Mg(2+).

The enzyme catalyses UMP + diphosphate = 5-phospho-alpha-D-ribose 1-diphosphate + uracil. It functions in the pathway pyrimidine metabolism; UMP biosynthesis via salvage pathway; UMP from uracil: step 1/1. With respect to regulation, allosterically activated by GTP. Functionally, catalyzes the conversion of uracil and 5-phospho-alpha-D-ribose 1-diphosphate (PRPP) to UMP and diphosphate. This is Uracil phosphoribosyltransferase from Streptococcus pneumoniae (strain ATCC BAA-255 / R6).